Reading from the N-terminus, the 1074-residue chain is Pleckstrin homology domain-containing family M member 1 (1074 aa).

The RUN domain occupies 40–182 (TSEDGDANTM…LSFELSYKSA (143 aa)). 3 disordered regions span residues 214–244 (QRKE…RRNR), 272–336 (LQEN…MFQT), and 382–454 (DEKQ…PPQE). S218 bears the Phosphoserine mark. Composition is skewed to polar residues over residues 313–329 (SKAQ…NQEP) and 393–404 (PAQSTSDQQPSS). S433, S436, and S491 each carry phosphoserine. The tract at residues 506–526 (GNAQPAPAPAPAPAPAPAPAP) is disordered. Residues 511–525 (APAPAPAPAPAPAPA) show a composition bias toward pro residues. Residues 551-642 (GLMKLGTVAR…WLDRVREALQ (92 aa)) form the PH 1 domain. The LIR signature appears at 649 to 655 (EDEWVNI). Residues 661 to 680 (AEDAPEAPPDSLPPYSTLLP) form a disordered region. The interaction with RAB7A stretch occupies residues 672–1074 (LPPYSTLLPE…RKYQEQNVVS (403 aa)). The region spanning 701-795 (DAIKESLLYL…WRDLVRKVLA (95 aa)) is the PH 2 domain. A Phorbol-ester/DAG-type zinc finger spans residues 1004 to 1058 (QHVYHCDLCTQRGFICQICHHQDIIFPFEFDTTVRCAECRTVFHQSCQAVVRKGC).

As to quaternary structure, interacts (via N- and C-terminus) with RAB7A (GTP-bound form). Simultaneously interacts with RAB7A and ARL8B; bringing about clustering and fusion of late endosomes and lysosomes. Interacts (via RUN domain) with ARL8B (GTP-bound form); the interaction is required for PLEKHM1 localization to lysosomes and for ARL8B function in delivery and degradation of endocytic and autophagic cargo in lysosomes. PLEKHM1 and PLEKHM2 compete for interaction with ARL8B. Interacts with ARL8A; the interaction is weaker than with ARL8B. Interacts with VPS41, VPS11, VPS18, VPS33A and VPS39; indicative for an association with the HOPS complex; the interactions with, at least, VPS41, VPS11, VPS18 and VPS33A require ARL8B. Interacts with GABARAP, GABARAPL, GABARAPL2, MAP1LC3A, MAP1LC3B and MAP1LC3C. Interacts with PAFAH1B. Interacts (via N- and C-terminus) with NDEL1. Interacts (via C-terminus) with MAP3K7. Interacts (via N- and C-terminus) with FAM98A. Interacts (via C-terminus) with DEF8; this interaction is weak but increased in a RAB7A-dependent manner. May interact with sialyl-lex-positive protein.

The protein resides in the autolysosome membrane. The protein localises to the endosome membrane. It localises to the late endosome membrane. Its subcellular location is the lysosome membrane. In terms of biological role, acts as a multivalent adapter protein that regulates Rab7-dependent and HOPS complex-dependent fusion events in the endolysosomal system and couples autophagic and the endocytic trafficking pathways. Acts as a dual effector of RAB7A and ARL8B that simultaneously binds these GTPases, bringing about clustering and fusion of late endosomes and lysosomes. Required for late stages of endolysosomal maturation, facilitating both endocytosis-mediated degradation of growth factor receptors and autophagosome clearance. Interaction with Arl8b is a crucial factor in the terminal maturation of autophagosomes and to mediate autophagosome-lysosome fusion. Positively regulates lysosome peripheral distribution and ruffled border formation in osteoclasts. May be involved in negative regulation of endocytic transport from early endosome to late endosome/lysosome implicating its association with Rab7. May have a role in sialyl-lex-mediated transduction of apoptotic signals. Involved in bone resorption. The protein is Pleckstrin homology domain-containing family M member 1 of Mus musculus (Mouse).